Reading from the N-terminus, the 123-residue chain is Large ribosomal subunit protein bL17 (123 aa).

The protein belongs to the bacterial ribosomal protein bL17 family. As to quaternary structure, part of the 50S ribosomal subunit. Contacts protein L32.

The polypeptide is Large ribosomal subunit protein bL17 (Dichelobacter nodosus (strain VCS1703A)).